Here is a 76-residue protein sequence, read N- to C-terminus: MDVTKTYVTIFVVAILTISVLIQIQQYDRCIGPCLRFYGNHQCYKNCRKAKYDGGQCDFVKKGEKLPECCCYYNKN.

The N-terminal stretch at 1 to 26 is a signal peptide; it reads MDVTKTYVTIFVVAILTISVLIQIQQ. Intrachain disulfides connect cysteine 30/cysteine 71, cysteine 34/cysteine 57, cysteine 43/cysteine 69, and cysteine 47/cysteine 70.

The protein belongs to the DEFL family.

It localises to the secreted. This Arabidopsis thaliana (Mouse-ear cress) protein is Putative defensin-like protein 62.